A 277-amino-acid chain; its full sequence is Small ribosomal subunit protein mS23 (277 aa).

2 disordered regions span residues 48–85 and 232–277; these read APSH…KKPS and LAAF…GPPI. A compositionally biased stretch (acidic residues) spans 244–269; sequence ESGESEDEIPLIEEEDAIGASEESET.

This sequence belongs to the mitochondrion-specific ribosomal protein mS23 family. Component of the mitochondrial small ribosomal subunit.

It is found in the mitochondrion. The chain is Small ribosomal subunit protein mS23 (RSM25) from Ajellomyces capsulatus (strain NAm1 / WU24) (Darling's disease fungus).